A 171-amino-acid chain; its full sequence is Dual specificity protein phosphatase OPG106 (171 aa).

One can recognise a Tyrosine-protein phosphatase domain in the interval 23 to 171 (SPTIMTRVTN…IIEKYVIDKN (149 aa)). The active-site Phosphocysteine intermediate is the C110.

This sequence belongs to the protein-tyrosine phosphatase family. Non-receptor class dual specificity subfamily. As to quaternary structure, homodimer.

Its subcellular location is the virion. The protein localises to the host cytoplasm. It carries out the reaction O-phospho-L-tyrosyl-[protein] + H2O = L-tyrosyl-[protein] + phosphate. The catalysed reaction is O-phospho-L-seryl-[protein] + H2O = L-seryl-[protein] + phosphate. With respect to regulation, inhibited by NSC-62914, NSC-28086, NSC-105687, NSC-23173, 540211 and 217691 with IC50 values of 48, 51, 212, 342, 4 and 11 uM, respectively. Functionally, serine/tyrosine phosphatase which down-regulates cellular antiviral response by dephosphorylating activated host STAT1 and blocking interferon (IFN)-stimulated innate immune responses. Dephosphorylates the OPG144 protein. The protein is Dual specificity protein phosphatase OPG106 (OPG106) of Homo sapiens (Human).